The sequence spans 92 residues: DNA-directed RNA polymerase subunit omega (92 aa).

The protein belongs to the RNA polymerase subunit omega family. As to quaternary structure, the RNAP catalytic core consists of 2 alpha, 1 beta, 1 beta' and 1 omega subunit. When a sigma factor is associated with the core the holoenzyme is formed, which can initiate transcription.

It carries out the reaction RNA(n) + a ribonucleoside 5'-triphosphate = RNA(n+1) + diphosphate. Functionally, promotes RNA polymerase assembly. Latches the N- and C-terminal regions of the beta' subunit thereby facilitating its interaction with the beta and alpha subunits. The polypeptide is DNA-directed RNA polymerase subunit omega (Shewanella oneidensis (strain ATCC 700550 / JCM 31522 / CIP 106686 / LMG 19005 / NCIMB 14063 / MR-1)).